A 352-amino-acid chain; its full sequence is Tropomodulin-3 (352 aa).

Ser25 bears the Phosphoserine mark.

Belongs to the tropomodulin family. As to quaternary structure, binds to the N-terminus of tropomyosin and to actin. Interacts with FLII. Ubiquitous.

It localises to the cytoplasm. The protein resides in the cytoskeleton. In terms of biological role, blocks the elongation and depolymerization of the actin filaments at the pointed end. The Tmod/TM complex contributes to the formation of the short actin protofilament, which in turn defines the geometry of the membrane skeleton. In Homo sapiens (Human), this protein is Tropomodulin-3 (TMOD3).